A 273-amino-acid polypeptide reads, in one-letter code: Formamidopyrimidine-DNA glycosylase (273 aa).

The Schiff-base intermediate with DNA role is filled by Pro-2. Glu-3 (proton donor) is an active-site residue. The Proton donor; for beta-elimination activity role is filled by Lys-57. DNA contacts are provided by His-90, Arg-109, and Lys-150. Residues Lys-235–Phe-269 form an FPG-type zinc finger. Residue Arg-259 is the Proton donor; for delta-elimination activity of the active site.

The protein belongs to the FPG family. As to quaternary structure, monomer. The cofactor is Zn(2+).

It carries out the reaction Hydrolysis of DNA containing ring-opened 7-methylguanine residues, releasing 2,6-diamino-4-hydroxy-5-(N-methyl)formamidopyrimidine.. The enzyme catalyses 2'-deoxyribonucleotide-(2'-deoxyribose 5'-phosphate)-2'-deoxyribonucleotide-DNA = a 3'-end 2'-deoxyribonucleotide-(2,3-dehydro-2,3-deoxyribose 5'-phosphate)-DNA + a 5'-end 5'-phospho-2'-deoxyribonucleoside-DNA + H(+). Its function is as follows. Involved in base excision repair of DNA damaged by oxidation or by mutagenic agents. Acts as a DNA glycosylase that recognizes and removes damaged bases. Has a preference for oxidized purines, such as 7,8-dihydro-8-oxoguanine (8-oxoG). Has AP (apurinic/apyrimidinic) lyase activity and introduces nicks in the DNA strand. Cleaves the DNA backbone by beta-delta elimination to generate a single-strand break at the site of the removed base with both 3'- and 5'-phosphates. In Aliivibrio fischeri (strain MJ11) (Vibrio fischeri), this protein is Formamidopyrimidine-DNA glycosylase.